We begin with the raw amino-acid sequence, 506 residues long: MSQSRARKVLIVGAGPVGALTALSLHRRGWEVEVWETRDDPRGQDAAPSNLRSINLAISSRGLEALRSVDPSIAENFLEEAIPMKGRMIHHTDGKQESQLYDPIGGQSINSISRPILNQRLVQSLPEAVKLRFNTKLKHIDFKNRVAYASHKQETSLLPGEESEKDKKQNTEDEDGTAFDLVIGCDGSWSKVRTAMMRAERIDFSQSFIPHAYIELHMPSDPASPGGYAMDKNHLHIWPRHAFMLIGLPNKDGSFTLTLFIPFSSLELLDTRESAAAFFREHFPSAVDIVGEKVLLDDFEKNPRGNLVTINCTPSAWSSHAILLGDASHSMVPFYGQGLNCGLEDVRVLSSILERHHISPTTTLALGETDPELELALKAYSDERQGDLKAICELALQNYTEMRSHVLSPLHHLRRQVDKVFTTLFRSAPQATLSLMEPFPTKKVRGWTSLYEMVTFRPDVGYSEALRKERWQKDVVGYAGWIGGVVGVGAAGVFAATMAKKWLERR.

Residues 153-175 are disordered; sequence QETSLLPGEESEKDKKQNTEDED. The span at 162–171 shows a compositional bias: basic and acidic residues; it reads ESEKDKKQNT.

This sequence belongs to the aromatic-ring hydroxylase family. KMO subfamily. The cofactor is FAD.

It localises to the mitochondrion outer membrane. The enzyme catalyses L-kynurenine + NADPH + O2 + H(+) = 3-hydroxy-L-kynurenine + NADP(+) + H2O. The protein operates within cofactor biosynthesis; NAD(+) biosynthesis; quinolinate from L-kynurenine: step 1/3. Functionally, catalyzes the hydroxylation of L-kynurenine (L-Kyn) to form 3-hydroxy-L-kynurenine (L-3OHKyn). Required for synthesis of quinolinic acid. This Cryptococcus neoformans var. neoformans serotype D (strain B-3501A) (Filobasidiella neoformans) protein is Kynurenine 3-monooxygenase.